Reading from the N-terminus, the 283-residue chain is 5'-nucleotidase SurE (283 aa).

Positions 14, 15, 47, and 105 each coordinate a divalent metal cation.

Belongs to the SurE nucleotidase family. It depends on a divalent metal cation as a cofactor.

Its subcellular location is the cytoplasm. The catalysed reaction is a ribonucleoside 5'-phosphate + H2O = a ribonucleoside + phosphate. Functionally, nucleotidase that shows phosphatase activity on nucleoside 5'-monophosphates. The chain is 5'-nucleotidase SurE from Chlamydia trachomatis serovar D (strain ATCC VR-885 / DSM 19411 / UW-3/Cx).